The primary structure comprises 489 residues: Rhamnulokinase (489 aa).

13 to 17 (ASSGR) is an ATP binding site. The cysteines at positions 68 and 222 are disulfide-linked. Residues Gly83 and 236 to 238 (HDT) contribute to the substrate site. Asp237 functions as the Proton acceptor in the catalytic mechanism. Thr259 contributes to the ATP binding site. Residue Asn296 participates in substrate binding. An ATP-binding site is contributed by Gln304. Cysteines 353 and 370 form a disulfide. Gly402 provides a ligand contact to ATP. A disulfide bridge connects residues Cys413 and Cys417.

It belongs to the rhamnulokinase family. It depends on Mg(2+) as a cofactor.

The enzyme catalyses L-rhamnulose + ATP = L-rhamnulose 1-phosphate + ADP + H(+). It functions in the pathway carbohydrate degradation; L-rhamnose degradation; glycerone phosphate from L-rhamnose: step 2/3. Functionally, involved in the catabolism of L-rhamnose (6-deoxy-L-mannose). Catalyzes the transfer of the gamma-phosphate group from ATP to the 1-hydroxyl group of L-rhamnulose to yield L-rhamnulose 1-phosphate. The sequence is that of Rhamnulokinase from Enterobacter sp. (strain 638).